The following is a 304-amino-acid chain: MKNATLHQFEVFAAIARTGSFTKAAEELFLTQPTVSQQMKQLTKAIGVPLYEQIGRKIYLTEAGQAVLDASKNITSCLDQLQEVIADLQGLKKGNLRLATITTGKYFVPRLLGEFRQQYPGISISLQIGNRQQILERLANNLDDLYFLGKPPSNLDINIRHFLENPLVVIASRQHPLVKEKKISLERLVNEPLIMRESGSGTRMAVEEFFSENRLKMNVEMEISSNEAIKQAVYGGLGISILSLYSLALEGINGPLAVLDVEGFPLQKHWYIIYQKSKQLSIVAQTFLDYLFAHDEAVSIAQIF.

The HTH lysR-type domain maps to methionine 1–threonine 61. Positions phenylalanine 21–lysine 40 form a DNA-binding region, H-T-H motif.

It belongs to the LysR transcriptional regulatory family.

The protein resides in the cytoplasm. Functionally, activates transcription of the cmpABCD operon under carbon dioxide-limited conditions. Specifically binds to the cmpR-cmpA intergenic region. In Synechocystis sp. (strain ATCC 27184 / PCC 6803 / Kazusa), this protein is HTH-type transcriptional activator CmpR (cmpR).